We begin with the raw amino-acid sequence, 97 residues long: Protein MxiI (97 aa).

The protein to S.typhimurium PrgJ.

Functionally, necessary for the secretion of IPA invasins. This is Protein MxiI (mxiI) from Shigella flexneri.